A 36-amino-acid polypeptide reads, in one-letter code: Pancreatic polypeptide (36 aa).

Residue tyrosine 36 is modified to Tyrosine amide.

The protein belongs to the NPY family.

The protein resides in the secreted. Functionally, hormone secreted by pancreatic cells that acts as a regulator of pancreatic and gastrointestinal functions probably by signaling through the G protein-coupled receptor NPY4R2. The polypeptide is Pancreatic polypeptide (PPY) (Chinchilla chinchilla (Short-tailed chinchilla)).